The chain runs to 499 residues: Bifunctional purine biosynthesis protein PurH (499 aa).

Positions 1-144 constitute an MGS-like domain; it reads MIKRALISVF…KNFQDVVVLT (144 aa).

This sequence belongs to the PurH family.

It carries out the reaction (6R)-10-formyltetrahydrofolate + 5-amino-1-(5-phospho-beta-D-ribosyl)imidazole-4-carboxamide = 5-formamido-1-(5-phospho-D-ribosyl)imidazole-4-carboxamide + (6S)-5,6,7,8-tetrahydrofolate. The enzyme catalyses IMP + H2O = 5-formamido-1-(5-phospho-D-ribosyl)imidazole-4-carboxamide. It participates in purine metabolism; IMP biosynthesis via de novo pathway; 5-formamido-1-(5-phospho-D-ribosyl)imidazole-4-carboxamide from 5-amino-1-(5-phospho-D-ribosyl)imidazole-4-carboxamide (10-formyl THF route): step 1/1. Its pathway is purine metabolism; IMP biosynthesis via de novo pathway; IMP from 5-formamido-1-(5-phospho-D-ribosyl)imidazole-4-carboxamide: step 1/1. The protein is Bifunctional purine biosynthesis protein PurH of Clostridium acetobutylicum (strain ATCC 824 / DSM 792 / JCM 1419 / IAM 19013 / LMG 5710 / NBRC 13948 / NRRL B-527 / VKM B-1787 / 2291 / W).